Here is a 399-residue protein sequence, read N- to C-terminus: Tyrosine--tRNA ligase (399 aa).

The short motif at 42 to 51 is the 'HIGH' region element; it reads PTAPDLHLGH. The short motif at 226–230 is the 'KMSKS' region element; the sequence is KMSKS. Lys-229 serves as a coordination point for ATP. The 62-residue stretch at 337 to 398 folds into the S4 RNA-binding domain; that stretch reads IAIANLLKDA…GKRKFARITV (62 aa).

Belongs to the class-I aminoacyl-tRNA synthetase family. TyrS type 2 subfamily. Homodimer.

Its subcellular location is the cytoplasm. The catalysed reaction is tRNA(Tyr) + L-tyrosine + ATP = L-tyrosyl-tRNA(Tyr) + AMP + diphosphate + H(+). In terms of biological role, catalyzes the attachment of tyrosine to tRNA(Tyr) in a two-step reaction: tyrosine is first activated by ATP to form Tyr-AMP and then transferred to the acceptor end of tRNA(Tyr). This chain is Tyrosine--tRNA ligase, found in Colwellia psychrerythraea (strain 34H / ATCC BAA-681) (Vibrio psychroerythus).